We begin with the raw amino-acid sequence, 979 residues long: Glutamate receptor ionotropic, kainate 5 (979 aa).

The N-terminal stretch at 1–14 (MPAELLLLLIVAFA) is a signal peptide. At 15-544 (NPSCQVLSSL…YFSFLDPFSP (530 aa)) the chain is on the extracellular side. 3 disulfides stabilise this stretch: Cys-36-Cys-292, Cys-83-Cys-334, and Cys-165-Cys-170. N-linked (GlcNAc...) asparagine glycans are attached at residues Asn-219, Asn-271, Asn-285, Asn-322, Asn-372, Asn-394, Asn-400, Asn-407, Asn-414, and Asn-478. The chain crosses the membrane as a helical span at residues 545 to 565 (AVWLFMLLAYLAVSCVLFLAA). Topologically, residues 566–622 (RLSPYEWYNPHPCLRARPHILENQYTLGNSLWFPVGGFMQQGSEIMPRALSTRCVSG) are cytoplasmic. The chain crosses the membrane as a helical span at residues 623–643 (VWWAFTLIIISSYTANLAAFL). The Extracellular segment spans residues 644-803 (TVQRMEVPVE…HRAKGLGMEN (160 aa)). The N-linked (GlcNAc...) asparagine glycan is linked to Asn-735. The helical transmembrane segment at 804-824 (IGGIFVVLICGLIIAVFVAVM) threads the bilayer. The Cytoplasmic segment spans residues 825 to 979 (EFIWSTRRSA…TGPRELTEHE (155 aa)). Residues 856-867 (RKTSRSRRRRRP) are compositionally biased toward basic residues. Disordered regions lie at residues 856 to 875 (RKTS…RALL), 890 to 925 (LYSA…APTP), and 942 to 979 (RASG…TEHE). The span at 894-903 (GAGGDAGAHG) shows a compositional bias: gly residues. Residues 912–923 (PGPPGGPRPQAP) are compositionally biased toward pro residues.

The protein belongs to the glutamate-gated ion channel (TC 1.A.10.1) family. GRIK5 subfamily. As to quaternary structure, homotetramer. Heterotetramer with GRIK2. Can form functional heteromeric receptors with GRIK1, GRIK2 and GRIK3. Forms a heteromeric complex with GRIK2. As to expression, expressed in the hippocampal mossy fiber synapses (at protein level).

The protein resides in the cell membrane. It is found in the postsynaptic cell membrane. Its subcellular location is the presynaptic cell membrane. Functionally, ionotropic glutamate receptor that functions as a cation-permeable ligand-gated ion channel, gated by L-glutamate and the glutamatergic agonist kainic acid. Cannot form functional channels on its own and produces channel activity only in heteromeric assembly with GRIK2 subunit. Can form functional heteromeric receptors with GRIK1 and GRIK3. In Mus musculus (Mouse), this protein is Glutamate receptor ionotropic, kainate 5 (Grik5).